The sequence spans 152 residues: Small ribosomal subunit protein uS11 (152 aa).

Belongs to the universal ribosomal protein uS11 family. As to quaternary structure, component of the small ribosomal subunit. Part of the small subunit (SSU) processome, composed of more than 70 proteins and the RNA chaperone small nucleolar RNA (snoRNA) U3.

It is found in the cytoplasm. The protein localises to the nucleus. Its subcellular location is the nucleolus. Its function is as follows. Component of the small ribosomal subunit. The ribosome is a large ribonucleoprotein complex responsible for the synthesis of proteins in the cell. Part of the small subunit (SSU) processome, first precursor of the small eukaryotic ribosomal subunit. During the assembly of the SSU processome in the nucleolus, many ribosome biogenesis factors, an RNA chaperone and ribosomal proteins associate with the nascent pre-rRNA and work in concert to generate RNA folding, modifications, rearrangements and cleavage as well as targeted degradation of pre-ribosomal RNA by the RNA exosome. This Caenorhabditis elegans protein is Small ribosomal subunit protein uS11 (rps-14).